We begin with the raw amino-acid sequence, 95 residues long: Aspartyl/glutamyl-tRNA(Asn/Gln) amidotransferase subunit C (95 aa).

This sequence belongs to the GatC family. In terms of assembly, heterotrimer of A, B and C subunits.

It carries out the reaction L-glutamyl-tRNA(Gln) + L-glutamine + ATP + H2O = L-glutaminyl-tRNA(Gln) + L-glutamate + ADP + phosphate + H(+). The enzyme catalyses L-aspartyl-tRNA(Asn) + L-glutamine + ATP + H2O = L-asparaginyl-tRNA(Asn) + L-glutamate + ADP + phosphate + 2 H(+). Allows the formation of correctly charged Asn-tRNA(Asn) or Gln-tRNA(Gln) through the transamidation of misacylated Asp-tRNA(Asn) or Glu-tRNA(Gln) in organisms which lack either or both of asparaginyl-tRNA or glutaminyl-tRNA synthetases. The reaction takes place in the presence of glutamine and ATP through an activated phospho-Asp-tRNA(Asn) or phospho-Glu-tRNA(Gln). The chain is Aspartyl/glutamyl-tRNA(Asn/Gln) amidotransferase subunit C from Pseudomonas syringae pv. syringae (strain B728a).